The chain runs to 347 residues: Pre-B-cell leukemia transcription factor 1 (347 aa).

A disordered region spans residues 1–37 (MDDQPRLMHSHPGVGMAGHPSLSQHMQDGTGANEGDV). Residues 38–232 (GRKQDIGDIL…VMILRSRFLD (195 aa)) enclose the PBC domain. The interval 45 to 124 (DILQQIMTIT…EGVAGPEKGG (80 aa)) is PBC-A. The interval 127 to 232 (AAAAAAAAAS…VMILRSRFLD (106 aa)) is PBC-B. Residues 233 to 295 (ARRKRRNFNK…NKRIRYKKNI (63 aa)) constitute a DNA-binding region (homeobox; TALE-type). The segment covering 318-331 (VHGSQANSPSTPSS) has biased composition (polar residues). The segment at 318-347 (VHGSQANSPSTPSSAGGYPSPCYQSDRRIQ) is disordered.

This sequence belongs to the TALE/PBX homeobox family. Forms a heterodimer with isoform 2 of meis1; the interaction is necessary for neural fate induction. In terms of tissue distribution, shows broad, weak expression from blastula through gastrula stages. At stage 14/15, expressed in a broad arc that gives rise to the forebrain and eyes. More intensely expressed in the lateral neural folds (presumptive neural crest) and as horizontal stripes in the posterior neural plate that give rise to the hindbrain. As development proceeds, expression progresses posteriorly along the neural folds and at stage 21, expression is pronounced in the prospective hindbrain and in migratory neural crest cells. At later stages (stage 26), expression becomes intense within the dorsal portion of the forebrain, and in the optic cup, caudal branchial arch, peripheral to the pronephric anlage, and in the dorsal anterior half of the spinal cord. Expression remains robust in the hindbrain but gradually becomes more restricted. At stage 28, expressed in the dorsal lateral portion of the neural tube and in the somatic layer of the lateral plate mesoderm that surrounds the pronephric anlage.

It is found in the nucleus. In terms of biological role, acts as a transcriptional activator in complex with isoform 2 of meis1, to induce posterior neural and neural crest gene expression, and thereby specify hindbrain and neural crest cell fate. Binds to a highly conserved region in the promoter of the neural crest gene zic3. Required for the nuclear transport or retention of isoform 2 of meis1. The protein is Pre-B-cell leukemia transcription factor 1 (pbx1) of Xenopus laevis (African clawed frog).